Reading from the N-terminus, the 472-residue chain is Cell division protein FtsP (472 aa).

A signal peptide (tat-type signal) is located at residues 1 to 32; it reads MSLSRRRFIQASGLALCAGGLPLQARASGAQA.

The protein belongs to the FtsP family. Post-translationally, predicted to be exported by the Tat system. The position of the signal peptide cleavage has not been experimentally proven.

It is found in the periplasm. Its function is as follows. Cell division protein that is required for growth during stress conditions. May be involved in protecting or stabilizing the divisomal assembly under conditions of stress. The sequence is that of Cell division protein FtsP from Edwardsiella tarda (strain FL6-60).